We begin with the raw amino-acid sequence, 252 residues long: Type I iodothyronine deiodinase (252 aa).

Residues 1–17 (MESLLQTIKLMLRYIQK) are Extracellular-facing. The helical; Signal-anchor for type III membrane protein transmembrane segment at 18-38 (ALILFFLFLYVVVGKVLMFLF) threads the bilayer. Residues 39-252 (PQTMASVLKS…EVCSVLEKKK (214 aa)) lie on the Cytoplasmic side of the membrane. The active site involves U130. Position 130 (U130) is a non-standard amino acid, selenocysteine.

Belongs to the iodothyronine deiodinase family. As to quaternary structure, predominantly monomer. Can form homodimers but homodimerization is not essential for enzyme activity.

The protein localises to the cell membrane. It is found in the endoplasmic reticulum membrane. Its subcellular location is the basolateral cell membrane. The enzyme catalyses 3,3',5-triiodo-L-thyronine + iodide + A + H(+) = L-thyroxine + AH2. It carries out the reaction 3,3',5'-triiodo-L-thyronine + iodide + A + H(+) = L-thyroxine + AH2. The catalysed reaction is 3,3'-diiodo-L-thyronine + iodide + A + H(+) = 3,3',5'-triiodo-L-thyronine + AH2. It catalyses the reaction 3,3'-diiodo-L-thyronine + iodide + A + H(+) = 3,3',5-triiodo-L-thyronine + AH2. The enzyme catalyses 3'-iodo-L-thyronine + iodide + A + H(+) = 3',5'-diiodo-L-thyronine + AH2. It carries out the reaction 3-iodo-L-thyronine + iodide + A + H(+) = 3,5-diiodo-L-thyronine + AH2. The catalysed reaction is 3-iodo-L-thyronine + iodide + A + H(+) = 3,3'-diiodo-L-thyronine + AH2. It catalyses the reaction 3,3'-diiodothyronamine + iodide + A + H(+) = 3,3',5'-triiodothyronamine + AH2. The enzyme catalyses 3'-iodothyronamine + iodide + A + H(+) = 3',5'-diiodothyronamine + AH2. It carries out the reaction 3-iodothyronamine + iodide + A + H(+) = 3,3'-diiodothyronamine + AH2. The catalysed reaction is 3,3'-diiodothyronamine + iodide + A + H(+) = 3,3',5-triiodothyronamine + AH2. It catalyses the reaction 3-iodothyronamine + iodide + A + H(+) = 3,5-diiodothyronamine + AH2. The enzyme catalyses 3,3'-diiodo-L-thyronine sulfate + iodide + A + H(+) = 3,3',5'-triiodo-L-thyronine sulfate + AH2. It carries out the reaction 3,3',5'-triiodo-L-thyronine sulfate + iodide + A + H(+) = L-thyroxine sulfate + AH2. The catalysed reaction is 3,3'-diiodo-L-thyronine sulfate + iodide + A + H(+) = 3,3',5-triiodo-L-thyronine sulfate + AH2. Lacks sensitivity to 6-n-propylthiouracil. In terms of biological role, plays a crucial role in the metabolism of thyroid hormones (TH) and has specific roles in TH activation and inactivation by deiodination. Catalyzes the deiodination of L-thyroxine (T4) to 3,5,3'-triiodothyronine (T3) and 3,3',5'-triiodothyronine (rT3) to 3,3'-diiodothyronine (3,3'-T2) via outer-ring deiodination (ORD). Catalyzes the deiodiantion of T4 to rT3 and T3 to 3,3'-T2 via inner-ring deiodination (IRD). Catalyzes the deiodination of 3',5'-diiodothyronine (3',5'-T2) to 3'-monoiodothyronine (3'-T1) via ORD. Catalyzes the deiodination of 3,5-diiodothyronine (3,5-T2) to 3-monoiodothyronine (3-T1) and 3,3'-T2 to 3-T1 via IRD. Catalyzes the phenolic ring deiodinations of 3,3',5'-triiodothyronamine, 3',5'-diiodothyronamine and 3,3'-diiodothyronamine as well as tyrosyl ring deiodinations of 3,5,3'-triiodothyronamine and 3,5-diiodothyronamine. Catalyzes the deiodination of L-thyroxine sulfate and 3,3',5-triiodo-L-thyronine sulfate via IRD and of 3,3',5'-triiodo-L-thyronine sulfate via ORD. The chain is Type I iodothyronine deiodinase (dio1) from Xenopus laevis (African clawed frog).